Here is a 465-residue protein sequence, read N- to C-terminus: UDP-N-acetylmuramate--L-alanine ligase (465 aa).

112–118 lines the ATP pocket; that stretch reads GTHGKTT.

Belongs to the MurCDEF family.

Its subcellular location is the cytoplasm. The catalysed reaction is UDP-N-acetyl-alpha-D-muramate + L-alanine + ATP = UDP-N-acetyl-alpha-D-muramoyl-L-alanine + ADP + phosphate + H(+). It participates in cell wall biogenesis; peptidoglycan biosynthesis. In terms of biological role, cell wall formation. The sequence is that of UDP-N-acetylmuramate--L-alanine ligase from Burkholderia orbicola (strain MC0-3).